Consider the following 143-residue polypeptide: 3-hydroxyacyl-[acyl-carrier-protein] dehydratase FabZ (143 aa).

The active site involves H47.

It belongs to the thioester dehydratase family. FabZ subfamily.

Its subcellular location is the cytoplasm. It carries out the reaction a (3R)-hydroxyacyl-[ACP] = a (2E)-enoyl-[ACP] + H2O. Its function is as follows. Involved in unsaturated fatty acids biosynthesis. Catalyzes the dehydration of short chain beta-hydroxyacyl-ACPs and long chain saturated and unsaturated beta-hydroxyacyl-ACPs. This Moorella thermoacetica (strain ATCC 39073 / JCM 9320) protein is 3-hydroxyacyl-[acyl-carrier-protein] dehydratase FabZ.